Reading from the N-terminus, the 159-residue chain is Protein phosphatase 1 regulatory subunit 17 (159 aa).

Disordered stretches follow at residues 1–79 (MSTE…HIPP) and 98–127 (RIPK…PALH). Composition is skewed to basic and acidic residues over residues 62–73 (SDQKKPRRKDTP) and 111–124 (SDME…KDTP). Phosphothreonine; by PKG/PRKG1 occurs at positions 72 and 123.

Post-translationally, substrate for cGMP-dependent protein kinase. Phosphorylation of Thr-72 and Thr-123 is required for its phosphatase activity. Phosphorylated by PRKG1 isoform alpha. Expressed in Purkinje cells of the cerebellum, hippocampus, pons, medulla and eye.

Its function is as follows. Inhibits phosphatase activities of protein phosphatase 1 (PP1) and protein phosphatase 2A (PP2A) complexes. The sequence is that of Protein phosphatase 1 regulatory subunit 17 (Ppp1r17) from Mus musculus (Mouse).